Consider the following 396-residue polypeptide: Actin-related protein 6 (396 aa).

Belongs to the actin family. ARP6 subfamily. Interacts with CBX1 and CBX3.

It is found in the cytoplasm. Its subcellular location is the cytoskeleton. The protein localises to the nucleus. The protein resides in the nucleolus. Its function is as follows. Required for formation and/or maintenance of the proper nucleolar structure and function. Plays a dual role in the regulation of ribosomal DNA (rDNA) transcription. In the presence of high glucose, it maintains active rDNA transcription through H2A.Z deposition and under glucose starvation, is required for the repression of rDNA transcription, and this function may be independent of H2A.Z. The sequence is that of Actin-related protein 6 (ACTR6) from Gallus gallus (Chicken).